The following is a 180-amino-acid chain: Bifunctional protein PyrR (180 aa).

A PRPP-binding motif is present at residues 101 to 113 (VILVDDVLYTGRT).

It belongs to the purine/pyrimidine phosphoribosyltransferase family. PyrR subfamily. As to quaternary structure, homodimer and homohexamer; in equilibrium.

The catalysed reaction is UMP + diphosphate = 5-phospho-alpha-D-ribose 1-diphosphate + uracil. In terms of biological role, regulates transcriptional attenuation of the pyrimidine nucleotide (pyr) operon by binding in a uridine-dependent manner to specific sites on pyr mRNA. This disrupts an antiterminator hairpin in the RNA and favors formation of a downstream transcription terminator, leading to a reduced expression of downstream genes. Also displays a weak uracil phosphoribosyltransferase activity which is not physiologically significant. The polypeptide is Bifunctional protein PyrR (Bacillus cereus (strain ATCC 14579 / DSM 31 / CCUG 7414 / JCM 2152 / NBRC 15305 / NCIMB 9373 / NCTC 2599 / NRRL B-3711)).